The chain runs to 113 residues: Pancreatic progenitor cell differentiation and proliferation factor A (113 aa).

It belongs to the PPDPF family.

Functionally, probable regulator of exocrine pancreas development. This Xenopus laevis (African clawed frog) protein is Pancreatic progenitor cell differentiation and proliferation factor A (ppdpf-a).